The sequence spans 310 residues: L-lactate dehydrogenase (310 aa).

NAD(+) contacts are provided by valine 11, aspartate 32, and arginine 37. Substrate is bound by residues glutamine 79, arginine 85, and 117–120 (NPVD). NAD(+)-binding positions include 115-117 (VTN) and threonine 140. 145 to 148 (DTAR) serves as a coordination point for substrate. Residues arginine 150 and histidine 165 each coordinate beta-D-fructose 1,6-bisphosphate. Histidine 172 acts as the Proton acceptor in catalysis. Phosphotyrosine is present on tyrosine 221. Threonine 230 contacts substrate.

Belongs to the LDH/MDH superfamily. LDH family. In terms of assembly, homotetramer.

It is found in the cytoplasm. The catalysed reaction is (S)-lactate + NAD(+) = pyruvate + NADH + H(+). It functions in the pathway fermentation; pyruvate fermentation to lactate; (S)-lactate from pyruvate: step 1/1. Its activity is regulated as follows. Allosterically activated by fructose 1,6-bisphosphate (FBP). In terms of biological role, catalyzes the conversion of lactate to pyruvate. The protein is L-lactate dehydrogenase of Fervidobacterium nodosum (strain ATCC 35602 / DSM 5306 / Rt17-B1).